The primary structure comprises 250 residues: tRNA (guanine-N(1)-)-methyltransferase (250 aa).

Residues G116 and 136–141 (IGDYVL) each bind S-adenosyl-L-methionine.

This sequence belongs to the RNA methyltransferase TrmD family. Homodimer.

The protein localises to the cytoplasm. It catalyses the reaction guanosine(37) in tRNA + S-adenosyl-L-methionine = N(1)-methylguanosine(37) in tRNA + S-adenosyl-L-homocysteine + H(+). In terms of biological role, specifically methylates guanosine-37 in various tRNAs. The protein is tRNA (guanine-N(1)-)-methyltransferase of Pseudomonas fluorescens (strain SBW25).